The following is a 238-amino-acid chain: MPLPVSITTLLLDIEGTTTPVDFVFKVLFPYARDRVADFLATQGADPEVQADLDLLRQEYAQEAAAELPDWAGEDAIAAVPYIQWLIDSDRKSTGLKSLQGKIWEQGYVSGEIKGQLFADVLPAFQRWQAAGLAIAIFSSGSVQAQQLLFGYSEAGDLSPHLSGYFDTRTGPKREAASYGAIAAQLGKAPAQVLFVSDIPAELEAAATAGFQTRLSLRPGNATVEIGDWTTIHSFDEL.

Belongs to the HAD-like hydrolase superfamily. MasA/MtnC family. In terms of assembly, monomer. Requires Mg(2+) as cofactor.

The catalysed reaction is 5-methylsulfanyl-2,3-dioxopentyl phosphate + H2O = 1,2-dihydroxy-5-(methylsulfanyl)pent-1-en-3-one + phosphate. Its pathway is amino-acid biosynthesis; L-methionine biosynthesis via salvage pathway; L-methionine from S-methyl-5-thio-alpha-D-ribose 1-phosphate: step 3/6. The protein operates within amino-acid biosynthesis; L-methionine biosynthesis via salvage pathway; L-methionine from S-methyl-5-thio-alpha-D-ribose 1-phosphate: step 4/6. In terms of biological role, bifunctional enzyme that catalyzes the enolization of 2,3-diketo-5-methylthiopentyl-1-phosphate (DK-MTP-1-P) into the intermediate 2-hydroxy-3-keto-5-methylthiopentenyl-1-phosphate (HK-MTPenyl-1-P), which is then dephosphorylated to form the acireductone 1,2-dihydroxy-3-keto-5-methylthiopentene (DHK-MTPene). This Synechococcus elongatus (strain ATCC 33912 / PCC 7942 / FACHB-805) (Anacystis nidulans R2) protein is Enolase-phosphatase E1.